A 267-amino-acid chain; its full sequence is Large ribosomal subunit protein mL57 (267 aa).

Positions 43 to 54 (SSSAVQQEQDAS) are enriched in low complexity. Residues 43–73 (SSSAVQQEQDASGTSSSQQPRPRWSYTPERM) are disordered.

The protein belongs to the ribonuclease III family. Mitochondrion-specific ribosomal protein mL57 subfamily. As to quaternary structure, component of the mitochondrial large ribosomal subunit (mt-LSU). Mature N.crassa 74S mitochondrial ribosomes consist of a small (37S) and a large (54S) subunit. The 37S small subunit contains a 16S ribosomal RNA (16S mt-rRNA) and 32 different proteins. The 54S large subunit contains a 23S rRNA (23S mt-rRNA) and 42 different proteins. mL57 forms a heterodimer with mL44 and stabilizes rRNA expansion segments 1/2 at a membrane-facing protuberance close to the point of attachment of the ribosome to the translocon in the membrane.

Its subcellular location is the mitochondrion. Functionally, component of the mitochondrial ribosome (mitoribosome), a dedicated translation machinery responsible for the synthesis of mitochondrial genome-encoded proteins, including at least some of the essential transmembrane subunits of the mitochondrial respiratory chain. The mitoribosomes are attached to the mitochondrial inner membrane and translation products are cotranslationally integrated into the membrane. In Neurospora crassa (strain ATCC 24698 / 74-OR23-1A / CBS 708.71 / DSM 1257 / FGSC 987), this protein is Large ribosomal subunit protein mL57 (mrpl15).